The sequence spans 36 residues: Cecropin-D (36 aa).

Lysine 36 bears the Lysine amide mark.

It belongs to the cecropin family.

The protein resides in the secreted. Cecropins have lytic and antibacterial activity against several Gram-positive and Gram-negative bacteria. The polypeptide is Cecropin-D (Antheraea pernyi (Chinese oak silk moth)).